The sequence spans 297 residues: N-acetylmuramic acid 6-phosphate etherase (297 aa).

One can recognise an SIS domain in the interval 55–218 (ATDALKSGGR…STGAMVKFGK (164 aa)). The active-site Proton donor is E83. The active site involves E114.

The protein belongs to the GCKR-like family. MurNAc-6-P etherase subfamily. Homodimer.

The enzyme catalyses N-acetyl-D-muramate 6-phosphate + H2O = N-acetyl-D-glucosamine 6-phosphate + (R)-lactate. It participates in amino-sugar metabolism; 1,6-anhydro-N-acetylmuramate degradation. It functions in the pathway amino-sugar metabolism; N-acetylmuramate degradation. Its pathway is cell wall biogenesis; peptidoglycan recycling. In terms of biological role, specifically catalyzes the cleavage of the D-lactyl ether substituent of MurNAc 6-phosphate, producing GlcNAc 6-phosphate and D-lactate. Together with AnmK, is also required for the utilization of anhydro-N-acetylmuramic acid (anhMurNAc) either imported from the medium or derived from its own cell wall murein, and thus plays a role in cell wall recycling. The protein is N-acetylmuramic acid 6-phosphate etherase of Enterobacter sp. (strain 638).